The following is a 140-amino-acid chain: uncharacterized protein (140 aa).

This is an uncharacterized protein from Saccharomyces cerevisiae (strain ATCC 204508 / S288c) (Baker's yeast).